Consider the following 298-residue polypeptide: ATP synthase gamma chain (298 aa).

This sequence belongs to the ATPase gamma chain family. In terms of assembly, F-type ATPases have 2 components, CF(1) - the catalytic core - and CF(0) - the membrane proton channel. CF(1) has five subunits: alpha(3), beta(3), gamma(1), delta(1), epsilon(1). CF(0) has three main subunits: a, b and c.

The protein localises to the cell inner membrane. Functionally, produces ATP from ADP in the presence of a proton gradient across the membrane. The gamma chain is believed to be important in regulating ATPase activity and the flow of protons through the CF(0) complex. The sequence is that of ATP synthase gamma chain from Desulfosudis oleivorans (strain DSM 6200 / JCM 39069 / Hxd3) (Desulfococcus oleovorans).